Consider the following 166-residue polypeptide: MSAIIEAKKQQVDVIAEQLKNSVSTVIVDYRGLTVAEVTELRSQLREAGVEYKVYKNTMVRRAAEQAGIEGLDEFLTGPTAVATSTEDVVAPAKVIAGFAKEHEALEIKTGVMEGSVISAEEVKTVGSLPSHDGLVSMLLSVLQAPVRNFAYAVKAVGEQKEESAE.

It belongs to the universal ribosomal protein uL10 family. In terms of assembly, part of the ribosomal stalk of the 50S ribosomal subunit. The N-terminus interacts with L11 and the large rRNA to form the base of the stalk. The C-terminus forms an elongated spine to which L12 dimers bind in a sequential fashion forming a multimeric L10(L12)X complex.

Forms part of the ribosomal stalk, playing a central role in the interaction of the ribosome with GTP-bound translation factors. This is Large ribosomal subunit protein uL10 from Staphylococcus haemolyticus (strain JCSC1435).